A 104-amino-acid chain; its full sequence is Large ribosomal subunit protein bL21 (104 aa).

The protein belongs to the bacterial ribosomal protein bL21 family. Part of the 50S ribosomal subunit. Contacts protein L20.

Functionally, this protein binds to 23S rRNA in the presence of protein L20. The chain is Large ribosomal subunit protein bL21 from Elusimicrobium minutum (strain Pei191).